Reading from the N-terminus, the 270-residue chain is Expansin-B10 (270 aa).

Positions 1–31 (MAVNVRTMWSSMRAQVAMVVALVFLVRGAWC) are cleaved as a signal peptide. Residue Asn41 is glycosylated (N-linked (GlcNAc...) asparagine). Residues 70–176 (GGGCGYKDVN…RRVKCKYDSK (107 aa)) form the Expansin-like EG45 domain. Intrachain disulfides connect Cys73–Cys101, Cys104–Cys171, and Cys109–Cys115. The Expansin-like CBD domain occupies 188–269 (NYLALLVKYV…NWKANTAYTA (82 aa)).

It belongs to the expansin family. Expansin B subfamily. In terms of tissue distribution, expressed in pollen.

It localises to the secreted. Its subcellular location is the cell wall. The protein localises to the membrane. In terms of biological role, may aid fertilization by loosening the cell wall of the stigma and style, thereby facilitating penetration of the pollen tube. Acts selectively on grass cell walls, which are relatively poor in pectins and xyloglucans and rich in glucuronoarabinoxylans and (1-3),(1-4)-beta-D-glucans, when compared with cell walls of other angiosperms, including other monocots. This is Expansin-B10 (EXPB10) from Zea mays (Maize).